The chain runs to 114 residues: MNGTFFNHTVFTHGVLLNRSQELAGTLVDCCTGNGSEVTANDGGGSLVLAQDERKLFVTRVVQIAVLCVLSLTVMFGIFFLGCNLMIKSESMINFLVKDRRSSKDVEAVMIGLS.

Residues 61–81 form a helical membrane-spanning segment; the sequence is VVQIAVLCVLSLTVMFGIFFL.

Belongs to the reprimo family.

The protein resides in the membrane. The polypeptide is Reprimo-like protein (rprml) (Danio rerio (Zebrafish)).